A 449-amino-acid polypeptide reads, in one-letter code: Na(+)-translocating NADH-quinone reductase subunit A (449 aa).

It belongs to the NqrA family. As to quaternary structure, composed of six subunits; NqrA, NqrB, NqrC, NqrD, NqrE and NqrF.

The enzyme catalyses a ubiquinone + n Na(+)(in) + NADH + H(+) = a ubiquinol + n Na(+)(out) + NAD(+). NQR complex catalyzes the reduction of ubiquinone-1 to ubiquinol by two successive reactions, coupled with the transport of Na(+) ions from the cytoplasm to the periplasm. NqrA to NqrE are probably involved in the second step, the conversion of ubisemiquinone to ubiquinol. The protein is Na(+)-translocating NADH-quinone reductase subunit A of Serratia proteamaculans (strain 568).